We begin with the raw amino-acid sequence, 246 residues long: Transmembrane protein 41 homolog (246 aa).

6 helical membrane passes run 12 to 32, 68 to 88, 101 to 123, 159 to 179, 182 to 202, and 219 to 239; these read WLVL…YSNF, SVVL…AIPG, PFYV…CYTI, IFLR…SPVL, PLAP…FLYI, and SWSS…PILL.

Belongs to the TMEM41 family.

It localises to the membrane. This is Transmembrane protein 41 homolog (tag-175) from Caenorhabditis elegans.